The following is a 621-amino-acid chain: Chaperone protein HscA homolog (621 aa).

Belongs to the heat shock protein 70 family.

Its function is as follows. Chaperone involved in the maturation of iron-sulfur cluster-containing proteins. Has a low intrinsic ATPase activity which is markedly stimulated by HscB. This is Chaperone protein HscA homolog from Polynucleobacter asymbioticus (strain DSM 18221 / CIP 109841 / QLW-P1DMWA-1) (Polynucleobacter necessarius subsp. asymbioticus).